The primary structure comprises 365 residues: Alanine racemase (365 aa).

The Proton acceptor; specific for D-alanine role is filled by lysine 32. The residue at position 32 (lysine 32) is an N6-(pyridoxal phosphate)lysine. Residue arginine 128 participates in substrate binding. Tyrosine 257 (proton acceptor; specific for L-alanine) is an active-site residue. Methionine 305 lines the substrate pocket.

Belongs to the alanine racemase family. Requires pyridoxal 5'-phosphate as cofactor.

It carries out the reaction L-alanine = D-alanine. It functions in the pathway amino-acid biosynthesis; D-alanine biosynthesis; D-alanine from L-alanine: step 1/1. Functionally, catalyzes the interconversion of L-alanine and D-alanine. May also act on other amino acids. This Francisella tularensis subsp. holarctica (strain OSU18) protein is Alanine racemase (alr).